A 318-amino-acid chain; its full sequence is L-malyl-CoA/beta-methylmalyl-CoA lyase (318 aa).

4 residues coordinate substrate: Phe19, Arg24, Lys30, and Arg76. Mg(2+)-binding residues include Glu141 and Asp168. Residues 167 to 168 and 251 to 252 contribute to the substrate site; these read AD and IH.

This sequence belongs to the HpcH/HpaI aldolase family. As to quaternary structure, homohexamer. Dimer of trimers. Mg(2+) serves as cofactor. Mn(2+) is required as a cofactor.

It catalyses the reaction (S)-malyl-CoA = glyoxylate + acetyl-CoA. It carries out the reaction (2R,3S)-beta-methylmalyl-CoA = propanoyl-CoA + glyoxylate. Involved in the ethylmalonyl-CoA pathway for acetate assimilation. Catalyzes the reversible condensation of glyoxylate and acetyl-CoA to L-malyl-CoA and the reversible condensation of glyoxylate and propionyl-CoA to yield beta-methylmalyl-CoA. The sequence is that of L-malyl-CoA/beta-methylmalyl-CoA lyase from Cereibacter sphaeroides (strain ATCC 17029 / ATH 2.4.9) (Rhodobacter sphaeroides).